The following is a 188-amino-acid chain: Defensin-like protein 99 (188 aa).

The signal sequence occupies residues 1–28 (MGSLKLSTVVVTALVVCLSILLISPTEA). Intrachain disulfides connect Cys-37–Cys-95, Cys-45–Cys-77, Cys-58–Cys-92, Cys-62–Cys-94, Cys-123–Cys-178, Cys-137–Cys-175, and Cys-141–Cys-177.

The protein belongs to the DEFL family.

The protein localises to the secreted. The protein is Defensin-like protein 99 of Arabidopsis thaliana (Mouse-ear cress).